The primary structure comprises 239 residues: Interleukin-27 subunit alpha (239 aa).

A signal peptide spans 1-28; it reads MGQMADDLGWRLSLLLLSLLLARAGVWG. An N-linked (GlcNAc...) asparagine glycan is attached at asparagine 89. The disordered stretch occupies residues 167–186; sequence EEENEAGRELLPGAPGGPSK.

This sequence belongs to the IL-6 superfamily. In terms of assembly, heterodimer with EBI3; not disulfide-linked. This heterodimer is known as interleukin IL-27. In terms of processing, O-glycosylated.

The protein localises to the secreted. Functionally, associates with EBI3 to form the IL-27 interleukin, a heterodimeric cytokine which functions in innate immunity. Cytokine with pro- and anti-inflammatory properties, that can regulate T-helper cell development, suppress T-cell proliferation, stimulate cytotoxic T-cell activity, induce isotype switching in B-cells, and that has diverse effects on innate immune cells. Among its target cells are CD4 T-helper cells which can differentiate in type 1 effector cells (TH1), type 2 effector cells (TH2) and IL17 producing helper T-cells (TH17). It drives rapid clonal expansion of naive but not memory CD4 T-cells. It also strongly synergizes with IL-12 to trigger interferon-gamma/IFN-gamma production of naive CD4 T-cells, binds to the cytokine receptor WSX-1/TCCR which appears to be required but not sufficient for IL-27-mediated signal transduction. IL-27 potentiate the early phase of TH1 response and suppress TH2 and TH17 differentiation. It induces the differentiation of TH1 cells via two distinct pathways, p38 MAPK/TBX21- and ICAM1/ITGAL/ERK-dependent pathways. It also induces STAT1, STAT3, STAT4 and STAT5 phosphorylation and activates TBX21/T-Bet via STAT1 with resulting IL12RB2 up-regulation, an event crucial to TH1 cell commitment. It suppresses the expression of GATA3, the inhibitor TH1 cells development. In CD8 T-cells, it activates STATs as well as GZMB. IL-27 reveals to be a potent inhibitor of TH17 cell development and of IL-17 production. Indeed IL27 alone is also able to inhibit the production of IL17 by CD4 and CD8 T-cells. While IL-27 suppressed the development of pro-inflammatory Th17 cells via STAT1, it inhibits the development of anti-inflammatory inducible regulatory T-cells, iTreg, independently of STAT1. IL-27 also has an effect on cytokine production, it suppresses pro-inflammatory cytokine production such as IL2, IL4, IL5 and IL6 and activates suppressors of cytokine signaling such as SOCS1 and SOCS3. Apart from suppression of cytokine production, IL-27 also antagonizes the effects of some cytokines such as IL6 through direct effects on T-cells. Another important role of IL-27 is its antitumor activity as well as its antiangiogenic activity with activation of production of antiangiogenic chemokines such as IP-10/CXCL10 and MIG/CXCL9. In vein endothelial cells, it induces IRF1/interferon regulatory factor 1 and increase the expression of MHC class II transactivator/CIITA with resulting up-regulation of major histocompatibility complex class II. The polypeptide is Interleukin-27 subunit alpha (IL27) (Sus scrofa (Pig)).